The chain runs to 178 residues: Dual-action ribosomal maturation protein DarP (178 aa).

Polar residues predominate over residues 1–14 (MTVSDHPQTVSQPD). Residues 1-25 (MTVSDHPQTVSQPDPESESRPSKTR) are disordered.

Belongs to the DarP family.

It is found in the cytoplasm. In terms of biological role, member of a network of 50S ribosomal subunit biogenesis factors which assembles along the 30S-50S interface, preventing incorrect 23S rRNA structures from forming. Promotes peptidyl transferase center (PTC) maturation. The protein is Dual-action ribosomal maturation protein DarP of Nitrosomonas europaea (strain ATCC 19718 / CIP 103999 / KCTC 2705 / NBRC 14298).